We begin with the raw amino-acid sequence, 271 residues long: DNA-directed RNA polymerase subunit Rpo3 (271 aa).

This sequence belongs to the archaeal Rpo3/eukaryotic RPB3 RNA polymerase subunit family. Part of the RNA polymerase complex.

Its subcellular location is the cytoplasm. It carries out the reaction RNA(n) + a ribonucleoside 5'-triphosphate = RNA(n+1) + diphosphate. In terms of biological role, DNA-dependent RNA polymerase (RNAP) catalyzes the transcription of DNA into RNA using the four ribonucleoside triphosphates as substrates. This Thermoplasma volcanium (strain ATCC 51530 / DSM 4299 / JCM 9571 / NBRC 15438 / GSS1) protein is DNA-directed RNA polymerase subunit Rpo3.